The sequence spans 102 residues: Large ribosomal subunit protein bL21 (102 aa).

This sequence belongs to the bacterial ribosomal protein bL21 family. As to quaternary structure, part of the 50S ribosomal subunit. Contacts protein L20.

Functionally, this protein binds to 23S rRNA in the presence of protein L20. The sequence is that of Large ribosomal subunit protein bL21 from Ehrlichia ruminantium (strain Gardel).